The primary structure comprises 224 residues: MGRGRVELKRIEGKINRQVTFAKRRNGLLKKAYELSVLCDAEVALIIFSNRGKLYEFCSSSSMLKTLERYQKCNYGAPEPNISTREALEISSQQEYLKLKGRYEALQRSQRNLLGEDLGPLNSKELESLERQLDMSLKQIRSTRTQLMLDQLTDYQRKEHALNEANRTLKQRLMEGSQLNLQCSQMHKLWAMAGKQLKLRAMASFILWIVNLLCKLGIRMIQLQ.

Positions 3–57 (RGRVELKRIEGKINRQVTFAKRRNGLLKKAYELSVLCDAEVALIIFSNRGKLYEF) constitute an MADS-box domain. The 91-residue stretch at 89 to 179 (EISSQQEYLK…KQRLMEGSQL (91 aa)) folds into the K-box domain.

Flower specific.

It is found in the nucleus. Its function is as follows. Probable transcription factor active in inflorescence development and floral organogenesis. This is Agamous-like MADS-box protein AGL9 homolog (TDR5) from Solanum lycopersicum (Tomato).